Here is a 545-residue protein sequence, read N- to C-terminus: Cleavage and polyadenylation specificity factor subunit 6 (545 aa).

The tract at residues 37–69 (ISPSANNGDAPEDRDYLDSLPAPGGNEGSKGAP) is disordered. Residues 81 to 161 (IALYIGNLTW…QNPIVTPCNK (81 aa)) form the RRM domain. A compositionally biased stretch (polar residues) spans 165-180 (SQFEMQSRKSTQSGQM). Disordered regions lie at residues 165-404 (SQFE…PLSE) and 478-545 (YGSV…YRHR). A compositionally biased stretch (gly residues) spans 184-200 (GKAGPPGSGSRGGGFPP). 4 stretches are compositionally biased toward pro residues: residues 220-230 (PVGPGGPPPHF), 237-265 (PRLPSGPPGPLGPPGPPPPGQGLPPPLGG), 287-363 (PMGP…PPGN), and 372-383 (GPPPGDPYGRPP). Basic and acidic residues-rich tracts occupy residues 384 to 397 (PYDRDFPGGRDMDA) and 483 to 497 (GRRERSRERDHSRSR). Residues 498–508 (EKSRRHKSRSR) show a composition bias toward basic residues. Basic and acidic residues predominate over residues 509-545 (DRHEDYYRERSRERDRHRERDRDRERDREREREYRHR).

The protein belongs to the RRM CPSF6/7 family. In terms of assembly, component of the cleavage factor Im (CFIm) complex.

The protein resides in the nucleus. Its subcellular location is the nucleoplasm. The protein localises to the nucleus speckle. It localises to the cytoplasm. Its function is as follows. Component of the cleavage factor Im (CFIm) complex that functions as an activator of the pre-mRNA 3'-end cleavage and polyadenylation processing required for the maturation of pre-mRNA into functional mRNAs. CFIm contributes to the recruitment of multiprotein complexes on specific sequences on the pre-mRNA 3'-end, so called cleavage and polyadenylation signals (pA signals). Most pre-mRNAs contain multiple pA signals, resulting in alternative cleavage and polyadenylation (APA) producing mRNAs with variable 3'-end formation. The CFIm complex acts as a key regulator of cleavage and polyadenylation site choice during APA through its binding to 5'-UGUA-3' elements localized in the 3'-untranslated region (UTR) for a huge number of pre-mRNAs. Plays a role in mRNA export. The chain is Cleavage and polyadenylation specificity factor subunit 6 from Danio rerio (Zebrafish).